A 779-amino-acid chain; its full sequence is uncharacterized protein (779 aa).

Serine 97 and serine 120 each carry phosphoserine. Residues glutamate 125 to valine 135 are compositionally biased toward basic and acidic residues. The disordered stretch occupies residues glutamate 125–serine 174. The segment covering alanine 144 to arginine 158 has biased composition (basic residues). Residues glutamine 159–proline 168 show a composition bias toward basic and acidic residues. ATP contacts are provided by residues glycine 215 to threonine 222 and glycine 533 to threonine 540. Residues aspartate 759–aspartate 779 form a disordered region.

Belongs to the AAA ATPase family.

It localises to the nucleus. This is an uncharacterized protein from Schizosaccharomyces pombe (strain 972 / ATCC 24843) (Fission yeast).